The primary structure comprises 143 residues: Nucleoside diphosphate kinase (143 aa).

Residues lysine 11, phenylalanine 59, arginine 87, threonine 93, arginine 104, and asparagine 114 each coordinate ATP. Histidine 117 acts as the Pros-phosphohistidine intermediate in catalysis.

Belongs to the NDK family. Homotetramer. Requires Mg(2+) as cofactor.

It localises to the cytoplasm. The catalysed reaction is a 2'-deoxyribonucleoside 5'-diphosphate + ATP = a 2'-deoxyribonucleoside 5'-triphosphate + ADP. It catalyses the reaction a ribonucleoside 5'-diphosphate + ATP = a ribonucleoside 5'-triphosphate + ADP. In terms of biological role, major role in the synthesis of nucleoside triphosphates other than ATP. The ATP gamma phosphate is transferred to the NDP beta phosphate via a ping-pong mechanism, using a phosphorylated active-site intermediate. This chain is Nucleoside diphosphate kinase, found in Alteromonas mediterranea (strain DSM 17117 / CIP 110805 / LMG 28347 / Deep ecotype).